Here is a 112-residue protein sequence, read N- to C-terminus: UPF0102 protein CFF8240_0294 (112 aa).

It belongs to the UPF0102 family.

This chain is UPF0102 protein CFF8240_0294, found in Campylobacter fetus subsp. fetus (strain 82-40).